Reading from the N-terminus, the 367-residue chain is Leu/Ile/Val-binding protein BraC3 (367 aa).

The N-terminal stretch at methionine 1–alanine 22 is a signal peptide.

It belongs to the leucine-binding protein family. In terms of assembly, the complex is composed of two ATP-binding proteins (BraF and BraG), two transmembrane proteins (BraD and BraE) and a solute-binding protein (BraC or BraC3).

It localises to the periplasm. Its function is as follows. Part of the ABC transporter complex BraDEFGC/C3 involved in transport of branched-chain amino acids Leu, Ile and Val (LIV). Essential for the development of bacteroids, the differentiated legume-symbiotic forms of this bacterium, and for the effective N(2) fixation by them. In Rhizobium johnstonii (strain DSM 114642 / LMG 32736 / 3841) (Rhizobium leguminosarum bv. viciae), this protein is Leu/Ile/Val-binding protein BraC3.